The chain runs to 692 residues: MARQFPLEKTRNIGIMAHIDAGKTTTTERILFYTGRVHKIGEVHDGAATMDWMVQEQERGITITSAATTAQWKGHRINIIDTPGHVDFTVEVERSLRVLDGAVAVFCSVGGVEPQSETVWRQADKYGVPRIAYINKMDRMGADFFRGVSMIADRLGANPVPIQIPIGAEDQFKGIIDLVTMKAMVYTDDLGTTSDTADIPGDLVDQANEYREKLLEAVADTDEELMMKYLEGEELTEEEIRNGIRKGTIGLKFIPVVCGSSFKNKGVQPLLDAVVEYMPAPTDVPNIKGVHPETGEADERHSSDKDPFSALAFKIMADPYVGKLAFFRVYSGVLSSGSYVYNSTKGKRERIGRILQMHANHREEIPEVYAGDIAAAVGLKDTTTGDTLCDDKAPIILESMQFPDPVINVAIEPKTKQDQEKMGTALARLAEEDPTFKMHTDQDSGQTIIEGMGELHLEIIVDRLQREFKVECNVGRPQVAYKETIRRAVKAEGKFVRQSGGRGQYGHCWIEIEPLEQGSGFEFVNKIVGGVIPREYIAPIGQGIEEAMQNGIQAGYPVMDIRATVYDGSYHDVDSSEMAFKIAGSMAFKAGAAKADPAIIEPVMKVEVTVPEEYMGEVIGDMNSRRGRIEGMEATGTAQIVRGFVPLSEMFGYATDLRSKTQGRGVYVMMFDHYEEVPKNIAEGIVAKRAGA.

One can recognise a tr-type G domain in the interval 8 to 282 (EKTRNIGIMA…AVVEYMPAPT (275 aa)). GTP is bound by residues 17-24 (AHIDAGKT), 81-85 (DTPGH), and 135-138 (NKMD). The segment at 285 to 304 (PNIKGVHPETGEADERHSSD) is disordered. Basic and acidic residues predominate over residues 290–304 (VHPETGEADERHSSD).

Belongs to the TRAFAC class translation factor GTPase superfamily. Classic translation factor GTPase family. EF-G/EF-2 subfamily.

It is found in the cytoplasm. Functionally, catalyzes the GTP-dependent ribosomal translocation step during translation elongation. During this step, the ribosome changes from the pre-translocational (PRE) to the post-translocational (POST) state as the newly formed A-site-bound peptidyl-tRNA and P-site-bound deacylated tRNA move to the P and E sites, respectively. Catalyzes the coordinated movement of the two tRNA molecules, the mRNA and conformational changes in the ribosome. This is Elongation factor G from Desulfitobacterium hafniense (strain Y51).